The sequence spans 520 residues: Endosomal/lysosomal proton channel TMEM175 (520 aa).

The disordered stretch occupies residues 1-27; the sequence is MGENDESEIIEHHDDEEMEKRRPPRTH. Topologically, residues 1–49 are cytoplasmic; the sequence is MGENDESEIIEHHDDEEMEKRRPPRTHAQSFLESVASSVKEGHSSTQSS. Over residues 9 to 21 the composition is skewed to basic and acidic residues; sequence IIEHHDDEEMEKR. A helical transmembrane segment spans residues 50–72; the sequence is HRLLAYSDALISIIATVMILPVA. Residues 51-57 carry the RxxxFSD motif 1 motif; the sequence is RLLAYSD. Topologically, residues 73–93 are lumenal; it reads HTKIQEDEELKQSIQALLTTK. A short helix H1-1 region spans residues 74-79; it reads TKIQED. Positions 81 to 87 are short helix H2-1; that stretch reads ELKQSIQ. A helical transmembrane segment spans residues 94 to 116; the sequence is IAVYLMTFLIVTVAWAAHIRLFQ. The Cytoplasmic portion of the chain corresponds to 117–122; it reads VIERID. The chain crosses the membrane as a helical span at residues 123-144; sequence DTLALLNLACMMLITFLPYTFS. At 145–154 the chain is on the lumenal side; that stretch reads LMATFPNNIL. Residues 155–176 traverse the membrane as a helical segment; sequence GILLFCACVMVIGLIQALIVLY. The Cytoplasmic portion of the chain corresponds to 177–200; that stretch reads GFSHPFLLNDQIQMSENQAYYKQH. 2 helical membrane-spanning segments follow: residues 201–221 and 222–242; these read ILKV…FSFI and FFQL…ISQC. Topologically, residues 243-274 are cytoplasmic; that stretch reads LKWIRSKAIGGQTDESPDSMPFYTYHPSEPLS. Residues 275–299 form a helical membrane-spanning segment; the sequence is KERVEAFSDGVFAIVATLLILDICE. Positions 277-283 match the RxxxFSD motif 2 motif; that stretch reads RVEAFSD. Residues 300-326 are Lumenal-facing; that stretch reads GNVPDPSVVKKKFDNSLIAALQEYGPE. The segment at 305–313 is short helix H1-2; it reads PSVVKKKFD. The interval 315 to 321 is short helix H2-2; that stretch reads SLIAALQ. A helical transmembrane segment spans residues 327 to 349; it reads YLAYFGSFVTVGLLWFVHHSLFL. Over 350 to 355 the chain is Cytoplasmic; the sequence is HVTKAT. A helical membrane pass occupies residues 356–377; sequence RLMGLFNTFSLAFVGGLPLAYQ. Over 378-392 the chain is Lumenal; it reads LTHESPRGSRNELEA. Residues 393–413 traverse the membrane as a helical segment; it reads VQISCVIIFFASLFQLAIWVT. Topologically, residues 414 to 433 are cytoplasmic; that stretch reads ALFTERETLHPYVRYGGREH. The helical transmembrane segment at 434-457 threads the bilayer; that stretch reads TFMLAKLSLYPCVALGTFFITCIL. The Lumenal portion of the chain corresponds to 458–459; that stretch reads SR. Residues 460–486 traverse the membrane as a helical segment; that stretch reads FSAPIFHMMEICIPFAFLLLRLLVRVA. At 487 to 520 the chain is on the cytoplasmic side; the sequence is LALLRWLFCSARNDLERIPVEEEESRLPINDIVT.

The protein belongs to the TMEM175 family. Homodimer.

It is found in the endosome membrane. It localises to the lysosome membrane. The catalysed reaction is H(+)(in) = H(+)(out). It carries out the reaction K(+)(in) = K(+)(out). Active at low pH (under pH 4.6): proton channel activity is activated by luminal side protons. Polyunsaturated fatty acids, such as arachidonic acid, also activate the channel activity. Its function is as follows. Proton-activated proton channel that catalyzes proton efflux from endosomes and lysosomes to maintain a steady-state pH. Activated at low pH (under pH 4.6) by luminal side protons: selectively mediates lysosomal proton release from lysosomes, eliciting a proton leak that balances V-ATPase activity to maintain pH homeostasis. Regulation of lumenal pH stability is required for autophagosome-lysosome fusion. Also acts as a potassium channel at higher pH, regulating potassium conductance in endosomes and lysosomes. The chain is Endosomal/lysosomal proton channel TMEM175 from Danio rerio (Zebrafish).